The sequence spans 258 residues: Mediator of RNA polymerase II transcription subunit 18 (258 aa).

This sequence belongs to the Mediator complex subunit 18 family. In terms of assembly, component of the Mediator complex.

The protein resides in the nucleus. Functionally, component of the Mediator complex, a coactivator involved in the regulated transcription of nearly all RNA polymerase II-dependent genes. Mediator functions as a bridge to convey information from gene-specific regulatory proteins to the basal RNA polymerase II transcription machinery. Mediator is recruited to promoters by direct interactions with regulatory proteins and serves as a scaffold for the assembly of a functional preinitiation complex with RNA polymerase II and the general transcription factors. This Eremothecium gossypii (strain ATCC 10895 / CBS 109.51 / FGSC 9923 / NRRL Y-1056) (Yeast) protein is Mediator of RNA polymerase II transcription subunit 18 (SRB5).